A 402-amino-acid chain; its full sequence is Formate-dependent phosphoribosylglycinamide formyltransferase (402 aa).

N(1)-(5-phospho-beta-D-ribosyl)glycinamide contacts are provided by residues 25-26 (EL) and Glu85. Residues Arg118, Lys159, 164 to 169 (SSGKGQ), 199 to 202 (EQFV), and Glu207 contribute to the ATP site. In terms of domain architecture, ATP-grasp spans 123–318 (RLASEELGLP…EFELHAKAVL (196 aa)). Residues Glu277 and Glu289 each coordinate Mg(2+). Residues Asp296, Lys365, and 372-373 (RR) each bind N(1)-(5-phospho-beta-D-ribosyl)glycinamide.

The protein belongs to the PurK/PurT family. In terms of assembly, homodimer.

The enzyme catalyses N(1)-(5-phospho-beta-D-ribosyl)glycinamide + formate + ATP = N(2)-formyl-N(1)-(5-phospho-beta-D-ribosyl)glycinamide + ADP + phosphate + H(+). Its pathway is purine metabolism; IMP biosynthesis via de novo pathway; N(2)-formyl-N(1)-(5-phospho-D-ribosyl)glycinamide from N(1)-(5-phospho-D-ribosyl)glycinamide (formate route): step 1/1. Involved in the de novo purine biosynthesis. Catalyzes the transfer of formate to 5-phospho-ribosyl-glycinamide (GAR), producing 5-phospho-ribosyl-N-formylglycinamide (FGAR). Formate is provided by PurU via hydrolysis of 10-formyl-tetrahydrofolate. The chain is Formate-dependent phosphoribosylglycinamide formyltransferase from Corynebacterium efficiens (strain DSM 44549 / YS-314 / AJ 12310 / JCM 11189 / NBRC 100395).